The following is an 882-amino-acid chain: DNA mismatch repair protein MutS (882 aa).

629–636 (GPNMGGKS) provides a ligand contact to ATP.

It belongs to the DNA mismatch repair MutS family.

Its function is as follows. This protein is involved in the repair of mismatches in DNA. It is possible that it carries out the mismatch recognition step. This protein has a weak ATPase activity. This Ralstonia nicotianae (strain ATCC BAA-1114 / GMI1000) (Ralstonia solanacearum) protein is DNA mismatch repair protein MutS.